The primary structure comprises 375 residues: Decapping and exoribonuclease protein Rai1 (375 aa).

Substrate is bound by residues Arg-43 and 120–122 (LRG). Residues Glu-180, Glu-222, Asp-224, Glu-247, and Leu-248 each coordinate Mg(2+). Position 222 (Glu-222) interacts with substrate. Residues Lys-249 and Gln-274 each contribute to the substrate site.

Belongs to the DXO/Dom3Z family. Interacts with Rat1. The cofactor is Mg(2+).

It catalyses the reaction a 5'-end triphospho-ribonucleoside in mRNA + H2O = a 5'-end phospho-ribonucleoside in mRNA + diphosphate + H(+). The enzyme catalyses a 5'-end NAD(+)-phospho-ribonucleoside in mRNA + H2O = a 5'-end phospho-ribonucleoside in mRNA + NAD(+) + H(+). The catalysed reaction is a 5'-end (N(7)-methyl 5'-triphosphoguanosine)-ribonucleoside-ribonucleotide in mRNA + H2O = a (N(7)-methyl 5'-triphosphoguanosine)-nucleoside + a 5'-end phospho-ribonucleoside in mRNA + H(+). In terms of biological role, decapping enzyme for NAD-capped RNAs: specifically hydrolyzes the nicotinamide adenine dinucleotide (NAD) cap from a subset of RNAs by removing the entire NAD moiety from the 5'-end of an NAD-capped RNA. The NAD-cap is present at the 5'-end of some RNAs and snoRNAs. In contrast to the canonical 5'-end N7 methylguanosine (m7G) cap, the NAD cap promotes mRNA decay. Also acts as a non-canonical decapping enzyme that removes the entire cap structure of m7G capped or incompletely capped RNAs and mediates their subsequent degradation. Specifically degrades pre-mRNAs with a defective 5'-end m7G cap and is part of a pre-mRNA capping quality control. Possesses 5'-pyrophosphohydrolase activity, hydrolyzing the 5'-end triphosphate to release pyrophosphates, and 5'-3' exonuclease activity. May be involved in RNA degradation in the nucleus. The sequence is that of Decapping and exoribonuclease protein Rai1 from Drosophila melanogaster (Fruit fly).